The sequence spans 183 residues: Ribosome rescue factor SmrB (183 aa).

In terms of domain architecture, Smr spans 98–173 (LDLHGLTQLQ…GDAALLVLIE (76 aa)).

Belongs to the SmrB family. As to quaternary structure, associates with collided ribosomes, but not with correctly translating polysomes.

Functionally, acts as a ribosome collision sensor. Detects stalled/collided disomes (pairs of ribosomes where the leading ribosome is stalled and a second ribosome has collided with it) and endonucleolytically cleaves mRNA at the 5' boundary of the stalled ribosome. Stalled/collided disomes form a new interface (primarily via the 30S subunits) that binds SmrB. Cleaved mRNA becomes available for tmRNA ligation, leading to ribosomal subunit dissociation and rescue of stalled ribosomes. The protein is Ribosome rescue factor SmrB of Salmonella agona (strain SL483).